The chain runs to 596 residues: PDZ and LIM domain protein 5 (596 aa).

At serine 2 the chain carries N-acetylserine. A Phosphoserine modification is found at serine 2. The region spanning 2–85 (SNYSVSLVGP…SLNMTLQRAS (84 aa)) is the PDZ domain. At lysine 89 the chain carries N6-acetyllysine; alternate. Position 89 is an N6-succinyllysine; alternate (lysine 89). Lysine 89 is covalently cross-linked (Glycyl lysine isopeptide (Lys-Gly) (interchain with G-Cter in SUMO2); alternate). Phosphoserine is present on residues serine 111, serine 134, and serine 137. Disordered regions lie at residues 121–165 (NNMA…SPSP), 196–240 (AGKT…GPPR), and 255–340 (THSD…RPGV). The span at 134–143 (SVSSPKVTSI) shows a compositional bias: polar residues. Residues 144 to 165 (PSPSSAFTPAHATTSSHASPSP) are compositionally biased toward low complexity. Polar residues-rich tracts occupy residues 205–219 (RQPTVTSVCSETSQE) and 226–237 (RGSQGDSKQQNG). Phosphoserine is present on residues serine 228 and serine 260. Composition is skewed to basic and acidic residues over residues 258 to 273 (DASKKRLIEDTEDWRP) and 293 to 304 (EHLKESEADNTK). A compositionally biased stretch (polar residues) spans 305–335 (KANNSQEPSPQLASSVASTRSMPESLDSPTS). 3 positions are modified to phosphoserine: serine 309, serine 313, and serine 322. Lysine 350 bears the N6-acetyllysine mark. The segment at 354–381 (STGVIKSPSWQRPNQGVPSTGRISNSAT) is disordered. Phosphoserine is present on residues serine 360 and serine 362. Over residues 361–381 (PSWQRPNQGVPSTGRISNSAT) the composition is skewed to polar residues. 3 LIM zinc-binding domains span residues 418–477 (PMCA…FFAP), 477–536 (PECG…LFGT), and 536–596 (TICH…SVNF).

In terms of assembly, interacts with various PKC isoforms through the LIM domains. Interacts with actin and alpha-actinin through the PDZ domain. Interacts (via LIM domains) with SIPA1L1/SPAR; this interaction may occur preferentially with isoform 1. In terms of tissue distribution, heart and skeletal muscle specific. Expression is commonly increased in the brain of patients with bipolar disorder, schizophrenia, and major depression.

It is found in the postsynaptic density. The protein resides in the presynapse. It localises to the postsynapse. The protein localises to the cytoplasm. Its subcellular location is the cytosol. Its function is as follows. May play an important role in the heart development by scaffolding PKC to the Z-disk region. May play a role in the regulation of cardiomyocyte expansion. Isoforms lacking the LIM domains may negatively modulate the scaffolding activity of isoform 1. Overexpression promotes the development of heart hypertrophy. Contributes to the regulation of dendritic spine morphogenesis in neurons. May be required to restrain postsynaptic growth of excitatory synapses. Isoform 1, but not isoform 2, expression favors spine thinning and elongation. The polypeptide is PDZ and LIM domain protein 5 (Homo sapiens (Human)).